Reading from the N-terminus, the 110-residue chain is U1-lycotoxin-Ls1bb (110 aa).

The N-terminal stretch at 1–20 (MKFVLLFGVLLVTLFSYSSA) is a signal peptide. A propeptide spanning residues 21 to 44 (EMLDDFDQADEDELLSLIEKEEAR) is cleaved from the precursor. Cystine bridges form between cysteine 47–cysteine 62, cysteine 54–cysteine 71, cysteine 61–cysteine 89, and cysteine 73–cysteine 87.

The protein belongs to the neurotoxin 19 (CSTX) family. 03 subfamily. Expressed by the venom gland.

The protein resides in the secreted. This is U1-lycotoxin-Ls1bb from Lycosa singoriensis (Wolf spider).